Consider the following 162-residue polypeptide: Protein A49R (162 aa).

It belongs to the poxviridae A49 protein family. In terms of assembly, interacts with host BTRC; this interaction inhibits NF-kappa-B activation.

The protein resides in the host cytoplasm. It localises to the host nucleus. Functionally, plays a role in the inhibition of host NF-kappa-B activation. Interacts with host BTRC and thereby diminishes ubiquitination of NF-kappa-B inhibitor alpha/NFKBIA. This stabilizes NFKBIA and its interaction with NF-kappaB, so retaining p65/RELA in the cytoplasm and preventing NF-kappa-B-dependent gene expression. This chain is Protein A49R, found in Bos taurus (Bovine).